Reading from the N-terminus, the 638-residue chain is DEAD-box ATP-dependent RNA helicase 52B (638 aa).

2 stretches are compositionally biased toward low complexity: residues 1–21 and 40–67; these read MRSSWADSAANAEESAPAAAA and GQAAPAAPAQAGALPSAAAAAQPSVGQP. The interval 1–129 is disordered; it reads MRSSWADSAA…WDRRDREPDP (129 aa). Positions 79–112 are enriched in gly residues; that stretch reads VNGGGGGGGGSVGGSRQGFGAGGRGGGGGGGGGA. Residues 119-128 show a composition bias toward basic and acidic residues; the sequence is GWDRRDREPD. A Q motif motif is present at residues 169–197; that stretch reads NTFAEIDLGDALNENIRRCKYVKPTPVQR. One can recognise a Helicase ATP-binding domain in the interval 200–384; it reads IPISIAGRDL…SDFLADYIFL (185 aa). 213-220 serves as a coordination point for ATP; that stretch reads AQTGSGKT. The DEAD box signature appears at 328-331; the sequence is DEAD. In terms of domain architecture, Helicase C-terminal spans 411–562; the sequence is YLMDLLHAQR…EVPQWLERYA (152 aa). The disordered stretch occupies residues 565 to 638; that stretch reads SSFGGGGGRN…GGQGFSSAWD (74 aa). Over residues 567–583 the composition is skewed to gly residues; it reads FGGGGGRNRRSGGGARF. Over residues 584–593 the composition is skewed to basic and acidic residues; the sequence is GGRDFRRDRG. The span at 594–632 shows a compositional bias: gly residues; sequence SGGGGYGGGGGGYGGGGYGGGGGGGGYGGGSSYGGGGQG.

The protein belongs to the DEAD box helicase family. DDX3/DED1 subfamily.

It carries out the reaction ATP + H2O = ADP + phosphate + H(+). The sequence is that of DEAD-box ATP-dependent RNA helicase 52B (PL10B) from Oryza sativa subsp. japonica (Rice).